Consider the following 161-residue polypeptide: ATP synthase subunit b 1 (161 aa).

The helical transmembrane segment at 6 to 26 (ETWVAIAFVILMVVFGYLGVF) threads the bilayer.

Belongs to the ATPase B chain family. In terms of assembly, F-type ATPases have 2 components, F(1) - the catalytic core - and F(0) - the membrane proton channel. F(1) has five subunits: alpha(3), beta(3), gamma(1), delta(1), epsilon(1). F(0) has three main subunits: a(1), b(2) and c(10-14). The alpha and beta chains form an alternating ring which encloses part of the gamma chain. F(1) is attached to F(0) by a central stalk formed by the gamma and epsilon chains, while a peripheral stalk is formed by the delta and b chains.

Its subcellular location is the cell inner membrane. In terms of biological role, f(1)F(0) ATP synthase produces ATP from ADP in the presence of a proton or sodium gradient. F-type ATPases consist of two structural domains, F(1) containing the extramembraneous catalytic core and F(0) containing the membrane proton channel, linked together by a central stalk and a peripheral stalk. During catalysis, ATP synthesis in the catalytic domain of F(1) is coupled via a rotary mechanism of the central stalk subunits to proton translocation. Functionally, component of the F(0) channel, it forms part of the peripheral stalk, linking F(1) to F(0). The sequence is that of ATP synthase subunit b 1 from Bradyrhizobium diazoefficiens (strain JCM 10833 / BCRC 13528 / IAM 13628 / NBRC 14792 / USDA 110).